The following is a 117-amino-acid chain: Large ribosomal subunit protein uL18 (117 aa).

Belongs to the universal ribosomal protein uL18 family. As to quaternary structure, part of the 50S ribosomal subunit; part of the 5S rRNA/L5/L18/L25 subcomplex. Contacts the 5S and 23S rRNAs.

Functionally, this is one of the proteins that bind and probably mediate the attachment of the 5S RNA into the large ribosomal subunit, where it forms part of the central protuberance. This chain is Large ribosomal subunit protein uL18, found in Haemophilus ducreyi (strain 35000HP / ATCC 700724).